Reading from the N-terminus, the 158-residue chain is Transcription elongation factor GreA (158 aa).

This sequence belongs to the GreA/GreB family.

Its function is as follows. Necessary for efficient RNA polymerase transcription elongation past template-encoded arresting sites. The arresting sites in DNA have the property of trapping a certain fraction of elongating RNA polymerases that pass through, resulting in locked ternary complexes. Cleavage of the nascent transcript by cleavage factors such as GreA or GreB allows the resumption of elongation from the new 3'terminus. GreA releases sequences of 2 to 3 nucleotides. The chain is Transcription elongation factor GreA from Baumannia cicadellinicola subsp. Homalodisca coagulata.